We begin with the raw amino-acid sequence, 229 residues long: Rab-like protein 2A (229 aa).

GTP-binding positions include Gly-28–Ser-35, Asp-76–Gln-80, and Asn-133–Asp-136. Residues Asn-200–Ser-229 form a disordered region.

Belongs to the small GTPase superfamily. Rab family. Interacts with IFT27, IFT81, IFT172, ATP6V1E1, HK1, LDHC, MAPRE1 and HSPA2.

Functionally, plays an essential role in male fertility, sperm intra-flagellar transport, and tail assembly. Binds, in a GTP-regulated manner, to a specific set of effector proteins including key proteins involved in cilia development and function and delivers them into the growing sperm tail. This is Rab-like protein 2A (RABL2A) from Pongo abelii (Sumatran orangutan).